Reading from the N-terminus, the 267-residue chain is L-aspartate dehydrogenase (267 aa).

The NAD(+) site is built by A124 and N190. The active site involves H218.

The protein belongs to the L-aspartate dehydrogenase family.

The catalysed reaction is L-aspartate + NADP(+) + H2O = oxaloacetate + NH4(+) + NADPH + H(+). It catalyses the reaction L-aspartate + NAD(+) + H2O = oxaloacetate + NH4(+) + NADH + H(+). Its pathway is cofactor biosynthesis; NAD(+) biosynthesis; iminoaspartate from L-aspartate (dehydrogenase route): step 1/1. Its function is as follows. Specifically catalyzes the NAD or NADP-dependent dehydrogenation of L-aspartate to iminoaspartate. This Methanocaldococcus jannaschii (strain ATCC 43067 / DSM 2661 / JAL-1 / JCM 10045 / NBRC 100440) (Methanococcus jannaschii) protein is L-aspartate dehydrogenase.